Here is a 113-residue protein sequence, read N- to C-terminus: Large ribosomal subunit protein uL24 (113 aa).

It belongs to the universal ribosomal protein uL24 family. In terms of assembly, part of the 50S ribosomal subunit.

One of two assembly initiator proteins, it binds directly to the 5'-end of the 23S rRNA, where it nucleates assembly of the 50S subunit. In terms of biological role, one of the proteins that surrounds the polypeptide exit tunnel on the outside of the subunit. The sequence is that of Large ribosomal subunit protein uL24 from Micrococcus luteus (strain ATCC 4698 / DSM 20030 / JCM 1464 / CCM 169 / CCUG 5858 / IAM 1056 / NBRC 3333 / NCIMB 9278 / NCTC 2665 / VKM Ac-2230) (Micrococcus lysodeikticus).